The sequence spans 132 residues: Small ribosomal subunit protein uS15 (132 aa).

It belongs to the universal ribosomal protein uS15 family. As to quaternary structure, part of the 30S ribosomal subunit.

In Methanobrevibacter smithii (strain ATCC 35061 / DSM 861 / OCM 144 / PS), this protein is Small ribosomal subunit protein uS15.